The primary structure comprises 455 residues: Putative FBD-associated F-box protein At5g56400 (455 aa).

Positions 32–81 (VDKISDLPEDLLVHILSLLPTTNDIVATSGVSKRWESLWTKVHKLRFNDR) constitute an F-box domain. The FBD domain occupies 372–421 (WNQQPSYVPECLTKSLEIFEWRNYKATFRERDVAVYILKNSTCLKKTVIS).

This Arabidopsis thaliana (Mouse-ear cress) protein is Putative FBD-associated F-box protein At5g56400.